A 445-amino-acid polypeptide reads, in one-letter code: UDP-glucuronic acid decarboxylase 2 (445 aa).

At Ala2 the chain carries N-acetylalanine. The Cytoplasmic segment spans residues 2–43 (ASELINRRHETDQPTADAYYPKPIKPWFTVTRPMRYMLREQR). The chain crosses the membrane as a helical; Signal-anchor for type II membrane protein span at residues 44-64 (LIFVLVGIAIATLVFTIFPRS). Residues 65–445 (TQSTPYSDPF…AATTTKTTSA (381 aa)) lie on the Lumenal side of the membrane. 149–174 (DNFFTGRKENVMHHFSNPNFEMIRHD) contributes to the NAD(+) binding site. Arg258 lines the substrate pocket. The active-site Proton acceptor is the Tyr261. Residue 261 to 265 (YDEGK) coordinates NAD(+). Asn290 lines the substrate pocket. Residue Arg302 coordinates NAD(+). Substrate-binding positions include 303-307 (VVSNF), 320-327 (YGDGKQTR), and 387-391 (DPHKR).

Belongs to the NAD(P)-dependent epimerase/dehydratase family. UDP-glucuronic acid decarboxylase subfamily. In terms of assembly, homodimer. Requires NAD(+) as cofactor. As to expression, ubiquitous.

Its subcellular location is the golgi apparatus. It localises to the golgi stack membrane. It catalyses the reaction UDP-alpha-D-glucuronate + H(+) = UDP-alpha-D-xylose + CO2. It participates in nucleotide-sugar biosynthesis; UDP-alpha-D-xylose biosynthesis; UDP-alpha-D-xylose from UDP-alpha-D-glucuronate: step 1/1. Its function is as follows. Catalyzes the NAD-dependent decarboxylation of UDP-glucuronic acid to UDP-xylose. Necessary for the biosynthesis of the core tetrasaccharide in glycosaminoglycan biosynthesis. This is UDP-glucuronic acid decarboxylase 2 (UXS2) from Arabidopsis thaliana (Mouse-ear cress).